A 229-amino-acid chain; its full sequence is UPF0173 metal-dependent hydrolase SAB1566c (229 aa).

The protein belongs to the UPF0173 family.

This is UPF0173 metal-dependent hydrolase SAB1566c from Staphylococcus aureus (strain bovine RF122 / ET3-1).